A 303-amino-acid chain; its full sequence is Caspase-7 (303 aa).

Positions 1-27 (MADDQNCAPELEKADPSGEDGVDAKPD) are disordered. At A2 the chain carries N-acetylalanine. Positions 2 to 23 (ADDQNCAPELEKADPSGEDGVD) are cleaved as a propeptide — N-terminally processed. The span at 10–27 (ELEKADPSGEDGVDAKPD) shows a compositional bias: basic and acidic residues. Position 30 is a phosphoserine (S30). Positions 38-41 (KKKK) are exosite. Residues 76–87 (KNFDKVTGMDVR) form a loop L1 region. The active site involves H144. T173 carries the phosphothreonine modification. Residue C186 is part of the active site. The segment at 187–196 (RGTELDDGVQ) is loop L2. Residues 199–206 (SGPINETD) constitute a propeptide that is removed on maturation. The loop L3 stretch occupies residues 226-238 (VPGYYSWRNPGKG). S239 is modified (phosphoserine). The tract at residues 274–288 (ESQCDDPCFNEKKQI) is loop L4.

Belongs to the peptidase C14A family. In terms of assembly, heterotetramer that consists of two anti-parallel arranged heterodimers, each one formed by a 20 kDa (p20) and a 11 kDa (p11) subunit. Interacts with XIAP (via its second BIR domain); inhibiting CASP7 activity. Interacts with BIRC6/bruce. Interacts with ATXN3 (short isoform 1). Interacts with HSPA5. In terms of processing, cleavage by different proteases, such as granzyme B (GZMB), caspase-1 (CASP1), caspase-8 (CASP8) or caspase-9 (CASP9) generate the two active subunits. Its involvement in different programmed cell death processes is probably specified by the protease that activates CASP7. Cleaved and activated by initiator caspases (CASP8 and/or CASP9), leading to execution phase of apoptosis. Cleavage and maturation by GZMB regulates granzyme-mediated programmed cell death. Cleaved and activated by CASP1 in response to bacterial infection. Propeptide domains can also be cleaved efficiently by CASP3. Active heterodimers between the small subunit of caspase-7 and the large subunit of CASP3, and vice versa, also occur. Also cleaved at the N-terminus at alternative sites by CAPN1, leading to its activation. Phosphorylation at Ser-30 and Ser-239 by PAK2 inhibits its activity. Phosphorylation at Ser-30 prevents cleavage and activation by initiator caspase CASP9, while phosphorylation at Ser-239 prevents thiol protease activity by preventing substrate-binding. Post-translationally, ubiquitinated by BIRC6; this activity is inhibited by DIABLO/SMAC.

It is found in the cytoplasm. The protein localises to the cytosol. The protein resides in the nucleus. It localises to the secreted. Its subcellular location is the extracellular space. The enzyme catalyses Strict requirement for an Asp residue at position P1 and has a preferred cleavage sequence of Asp-Glu-Val-Asp-|-.. Its activity is regulated as follows. During activation, the N-terminal disordered prodomain is removed by cleavage. Concomitantly, double cleavage gives rise to a large Caspase-7 subunit p20 and a small Caspase-7 subunit p11. The two large and two small subunits then assemble to form the active CASP7 complex. Can be cleaved and activated by different caspases, depending on the context. Cleaved and activated by initiator caspases (CASP8 and/or CASP9), leading to execution phase of apoptosis. Cleavage and maturation by GZMB regulates granzyme-mediated programmed cell death. Cleavage and maturation by CASP1 regulates pyroptosis. Inhibited by XIAP, which directly binds to the active site pocket and obstructs substrate entry. Phosphorylation at Ser-30 and Ser-239 by PAK2 inhibits its activity. Inhibited by BIRC6; following inhibition of BIRC6-caspase binding by DIABLO/SMAC, BIRC6 is subjected to caspase cleavage, leading to an increase in active caspases. Its function is as follows. Thiol protease involved in different programmed cell death processes, such as apoptosis, pyroptosis or granzyme-mediated programmed cell death, by proteolytically cleaving target proteins. Has a marked preference for Asp-Glu-Val-Asp (DEVD) consensus sequences, with some plasticity for alternate non-canonical sequences. Its involvement in the different programmed cell death processes is probably determined by upstream proteases that activate CASP7. Acts as an effector caspase involved in the execution phase of apoptosis: following cleavage and activation by initiator caspases (CASP8 and/or CASP9), mediates execution of apoptosis by catalyzing cleavage of proteins, such as CLSPN, PARP1, PTGES3 and YY1. Compared to CASP3, acts as a minor executioner caspase and cleaves a limited set of target proteins. Acts as a key regulator of the inflammatory response in response to bacterial infection by catalyzing cleavage and activation of the sphingomyelin phosphodiesterase SMPD1 in the extracellular milieu, thereby promoting membrane repair. Regulates pyroptosis in intestinal epithelial cells: cleaved and activated by CASP1 in response to S.typhimurium infection, promoting its secretion to the extracellular milieu, where it catalyzes activation of SMPD1, generating ceramides that repair membranes and counteract the action of gasdermin-D (GSDMD) pores. Regulates granzyme-mediated programmed cell death in hepatocytes: cleaved and activated by granzyme B (GZMB) in response to bacterial infection, promoting its secretion to the extracellular milieu, where it catalyzes activation of SMPD1, generating ceramides that repair membranes and counteract the action of perforin (PRF1) pores. Following cleavage by CASP1 in response to inflammasome activation, catalyzes processing and inactivation of PARP1, alleviating the transcription repressor activity of PARP1. Acts as an inhibitor of type I interferon production during virus-induced apoptosis by mediating cleavage of antiviral proteins CGAS, IRF3 and MAVS, thereby preventing cytokine overproduction. Cleaves and activates sterol regulatory element binding proteins (SREBPs). Cleaves phospholipid scramblase proteins XKR4, XKR8 and XKR9. Cleaves BIRC6 following inhibition of BIRC6-caspase binding by DIABLO/SMAC. The polypeptide is Caspase-7 (CASP7) (Mesocricetus auratus (Golden hamster)).